Reading from the N-terminus, the 147-residue chain is Hemoglobin subunit gamma (147 aa).

A Globin domain is found at 3 to 147; it reads NFTAEDKAAI…VASALASRYH (145 aa). Heme b contacts are provided by His-64 and His-93.

This sequence belongs to the globin family. Heterotetramer of two alpha chains and two gamma chains in fetal hemoglobin (Hb F). In terms of tissue distribution, red blood cells.

Its function is as follows. Gamma chains make up the fetal hemoglobin F, in combination with alpha chains. This Lagothrix lagotricha (Brown woolly monkey) protein is Hemoglobin subunit gamma (HBG).